An 84-amino-acid polypeptide reads, in one-letter code: U21-theraphotoxin-Cg1a 2 (84 aa).

The signal sequence occupies residues 1–21 (MKVSVLITLAVLGVMFLFTSA). A propeptide spanning residues 22–47 (EERGSDQMDSPAWLKSMEIIFQSEER) is cleaved from the precursor. 3 cysteine pairs are disulfide-bonded: C49/C63, C56/C68, and C62/C76. Valine amide is present on V82.

It belongs to the neurotoxin 10 (Hwtx-1) family. 05 (F4a) subfamily. In terms of tissue distribution, expressed by the venom gland.

Its subcellular location is the secreted. Functionally, probable ion channel inhibitor. The protein is U21-theraphotoxin-Cg1a 2 of Chilobrachys guangxiensis (Chinese earth tiger tarantula).